The following is a 730-amino-acid chain: MKPKNVPREIFNPFTNKTSLGTRREGLFLCKRLKLRPDNYLEEYCADLEVIDIMAPIRPADETERCPPTSTSDDQEAGDYLVSRNKKSRNSDYMLFSSDALVHIAHDAKVSEKYTWLGERLRLTFKMMRSDSRLIRTMCHSHGFMQCSSKNPSVNVIWMGAPVKSVRMRELMPWQRLNQFPRSTELTKKDRLYENIERSKSIFGESFDFIPEFYVTPRENRKMENAFVRVAKEIAAAGGELCFPGEFIVKPTNSRQGKGIFFANSMADIPAEGPLLVSRYLKDPYLVNNHKFDLRIYVAVTSFYPLVAYVYSEGLARLASRPYDTSASSADSNEYVHLTNYSINKNSTSFVRNESMSSEDLGHKWTLGALLRYVENEGKDAKLLMLRIEDLIVKSLLSIQNSVATASRTNLRFACTNFELFGFDVLVDQALKPWLLEVNLSPSLACDAPLDSLLKTRLIADLLNLACVPLLDRKIIDSVTPALRKSMNSQESESSETDDLELDPMCAKTLKRRPVGLKRSVLNKKIVSGSTSLIPNNEKKFDQIVRKAELEDGRRGDFIRVFPRNGTWGMYSPVMEDLGNEDFDERLFDEVVTKKNTKNSSGSSKASSSSASASSSSSSMHIEDLSDLFHEVMMQCDKYSSIADVPIEIREIISPWYEEASEYTKKITQEGETYACKLPVIRSTARLRTKSCAEFYEVRKVQLAKKKESEAMASKENEPIVLQAVVAKRI.

Residues 120 to 478 form the TTL domain; sequence RLRLTFKMMR…PLLDRKIIDS (359 aa). Residues 278–281, Lys291, and Asp293 each bind ATP; that span reads SRYL. The interval 594–618 is disordered; the sequence is KKNTKNSSGSSKASSSSASASSSSS. Over residues 600–618 the composition is skewed to low complexity; that stretch reads SSGSSKASSSSASASSSSS.

It belongs to the tubulin--tyrosine ligase family. Expressed in body wall muscles. Not expressed in sensory neurons.

The catalysed reaction is L-glutamyl-[protein] + L-glutamate + ATP = gamma-L-glutamyl-L-glutamyl-[protein] + ADP + phosphate + H(+). Its function is as follows. Polyglutamylase which preferentially modifies alpha-tubulin. Involved in the side-chain initiation step of the polyglutamylation reaction rather than in the elongation step. Together with ttll-4 and ttll-11, required for male mating. Probably by regulating microtubule stability via the glutamylation of tubulin, negatively regulates axon regrowth after injury in PLM neurons. In Caenorhabditis elegans, this protein is Tubulin polyglutamylase ttll-5.